The chain runs to 101 residues: Urease subunit beta (101 aa).

The protein belongs to the urease beta subunit family. Heterotrimer of UreA (gamma), UreB (beta) and UreC (alpha) subunits. Three heterotrimers associate to form the active enzyme.

It localises to the cytoplasm. The enzyme catalyses urea + 2 H2O + H(+) = hydrogencarbonate + 2 NH4(+). It functions in the pathway nitrogen metabolism; urea degradation; CO(2) and NH(3) from urea (urease route): step 1/1. The polypeptide is Urease subunit beta (Verminephrobacter eiseniae (strain EF01-2)).